We begin with the raw amino-acid sequence, 540 residues long: CTP synthase (540 aa).

The interval 1–267 (MTKYIFVTGG…DQKVCDFLHL (267 aa)) is amidoligase domain. Ser-13 is a CTP binding site. A UTP-binding site is contributed by Ser-13. 14–19 (SLGKGI) is an ATP binding site. Tyr-54 contacts L-glutamine. Asp-71 serves as a coordination point for ATP. Mg(2+) contacts are provided by Asp-71 and Glu-141. CTP-binding positions include 148 to 150 (DIE), 188 to 193 (KTKPTQ), and Lys-224. UTP is bound by residues 188–193 (KTKPTQ) and Lys-224. Residues 294 to 537 (TITLVGKYVE…IGAASGLPAQ (244 aa)) form the Glutamine amidotransferase type-1 domain. Gly-356 provides a ligand contact to L-glutamine. Cys-383 functions as the Nucleophile; for glutamine hydrolysis in the catalytic mechanism. L-glutamine contacts are provided by residues 384–387 (LGMQ), Glu-407, and Arg-465. Active-site residues include His-510 and Glu-512.

Belongs to the CTP synthase family. As to quaternary structure, homotetramer.

It catalyses the reaction UTP + L-glutamine + ATP + H2O = CTP + L-glutamate + ADP + phosphate + 2 H(+). The catalysed reaction is L-glutamine + H2O = L-glutamate + NH4(+). The enzyme catalyses UTP + NH4(+) + ATP = CTP + ADP + phosphate + 2 H(+). Its pathway is pyrimidine metabolism; CTP biosynthesis via de novo pathway; CTP from UDP: step 2/2. Allosterically activated by GTP, when glutamine is the substrate; GTP has no effect on the reaction when ammonia is the substrate. The allosteric effector GTP functions by stabilizing the protein conformation that binds the tetrahedral intermediate(s) formed during glutamine hydrolysis. Inhibited by the product CTP, via allosteric rather than competitive inhibition. Its function is as follows. Catalyzes the ATP-dependent amination of UTP to CTP with either L-glutamine or ammonia as the source of nitrogen. Regulates intracellular CTP levels through interactions with the four ribonucleotide triphosphates. In Lactobacillus johnsonii (strain CNCM I-12250 / La1 / NCC 533), this protein is CTP synthase.